We begin with the raw amino-acid sequence, 1101 residues long: Rho guanine nucleotide exchange factor gef2 (1101 aa).

Residues 203–222 (EDSRKKTSSPSPSFASSKDA) are disordered. The span at 210-219 (SSPSPSFASS) shows a compositional bias: low complexity. Positions 230 to 428 (KKKSLLIEMM…KNIAEMPTVD (199 aa)) constitute a DH domain. 2 positions are modified to phosphoserine: serine 736 and serine 977.

The protein localises to the cytoplasm. The protein resides in the cytoskeleton. It is found in the microtubule organizing center. Its subcellular location is the spindle pole body. Its function is as follows. Has a role in the control of cell polarity and cytokinesis. Involved in bipolar growth and septum formation. The polypeptide is Rho guanine nucleotide exchange factor gef2 (gef2) (Schizosaccharomyces pombe (strain 972 / ATCC 24843) (Fission yeast)).